The following is a 528-amino-acid chain: ATP synthase subunit beta 2 (528 aa).

The segment covering 1-10 (MADPQATNGT) has biased composition (polar residues). The disordered stretch occupies residues 1–27 (MADPQATNGTGAACAERDASDVGDARD). Basic and acidic residues predominate over residues 15 to 27 (AERDASDVGDARD). 179-186 (GGAGVGKT) contributes to the ATP binding site. Residues 488–499 (AAAREADARREA) show a composition bias toward basic and acidic residues. Residues 488–528 (AAAREADARREAAAAASGAGPGTTSDPASGSAEPQGARHGR) form a disordered region.

This sequence belongs to the ATPase alpha/beta chains family. F-type ATPases have 2 components, CF(1) - the catalytic core - and CF(0) - the membrane proton channel. CF(1) has five subunits: alpha(3), beta(3), gamma(1), delta(1), epsilon(1). CF(0) has three main subunits: a(1), b(2) and c(9-12). The alpha and beta chains form an alternating ring which encloses part of the gamma chain. CF(1) is attached to CF(0) by a central stalk formed by the gamma and epsilon chains, while a peripheral stalk is formed by the delta and b chains.

It is found in the cell inner membrane. It catalyses the reaction ATP + H2O + 4 H(+)(in) = ADP + phosphate + 5 H(+)(out). Produces ATP from ADP in the presence of a proton gradient across the membrane. The catalytic sites are hosted primarily by the beta subunits. The protein is ATP synthase subunit beta 2 of Burkholderia pseudomallei (strain 1106a).